The following is a 367-amino-acid chain: Alpha-2-HS-glycoprotein (367 aa).

The first 18 residues, 1-18, serve as a signal peptide directing secretion; the sequence is MKSLVLLLCLAQLWGCHS. In terms of domain architecture, Cystatin fetuin-A-type 1 spans 27–133; sequence YRQPNCDDPE…KFSVVYAKCD (107 aa). 6 cysteine pairs are disulfide-bonded: cysteine 32-cysteine 358, cysteine 89-cysteine 100, cysteine 114-cysteine 132, cysteine 146-cysteine 149, cysteine 208-cysteine 219, and cysteine 230-cysteine 247. Serine 134 is subject to Phosphoserine. A phosphoserine; by FAM20C mark is found at serine 135 and serine 138. The Cystatin fetuin-A-type 2 domain occupies 144–255; that stretch reads KVCQDCPLLA…TCMVFQTQPV (112 aa). N-linked (GlcNAc...) (complex) asparagine glycosylation is found at asparagine 156 and asparagine 176. The interval 255–298 is disordered; that stretch reads VSSQPQPEGANEAVPTPVVDPDAPPSPPLGAPGLPPAGSPPDSH. O-linked (GalNAc...) threonine glycosylation is present at threonine 270. A compositionally biased stretch (pro residues) spans 276-293; the sequence is DAPPSPPLGAPGLPPAGS. Serine 280 and serine 293 each carry an O-linked (GalNAc...) serine glycan. Residues 301–340 constitute a propeptide, connecting peptide; the sequence is LAAPPGHQLHRAHYDLRHTFMGVVSLGSPSGEVSHPRKTR. The residue at position 319 (threonine 319) is a Phosphothreonine; by FAM20C. Residues serine 325, serine 328, and serine 330 each carry the phosphoserine; by FAM20C modification. O-linked (GalNAc...) threonine glycosylation is found at threonine 339 and threonine 341. O-linked (GalNAc...) serine glycosylation occurs at serine 346.

Belongs to the fetuin family. As to quaternary structure, alpha-2-HS glycoprotein derives from this precursor, when the connecting peptide is cleaved off. The two chains A and B are held together by a single disulfide bond. Post-translationally, phosphorylated by FAM20C in the extracellular medium. O- and N-glycosylated. O-glycosylated with core 1 or possibly core 8 glycans. N-glycan at Asn-156: Hex5HexNAc4; N-glycan heterogeneity at Asn-176: Hex5HexNAc4 (major) and Hex6HexNAc5 (minor). In terms of tissue distribution, synthesized in liver and selectively concentrated in bone matrix. Secreted in plasma. It is also found in dentin in much higher quantities than other plasma proteins.

It is found in the secreted. Functionally, promotes endocytosis, possesses opsonic properties and influences the mineral phase of bone. Shows affinity for calcium and barium ions. This is Alpha-2-HS-glycoprotein (AHSG) from Homo sapiens (Human).